A 386-amino-acid chain; its full sequence is Homeobox protein Hox-A13 (386 aa).

The segment at residues 320-379 is a DNA-binding region (homeobox); that stretch reads GRKKRVPYTKVQLKELEREYATNKFITKDKRRRISATTNLSERQVTIWFQNRRVKEKKVI.

Belongs to the Abd-B homeobox family. As to quaternary structure, binds DNA as a homodimer. Interacts with MEIS1, MEIS2 and MEIS3.

Its subcellular location is the nucleus. Sequence-specific, AT-rich binding transcription factor which is part of a developmental regulatory system that provides cells with specific positional identities on the anterior-posterior axis. This chain is Homeobox protein Hox-A13 (Hoxa13), found in Mus musculus (Mouse).